The following is a 203-amino-acid chain: N-(5'-phosphoribosyl)anthranilate isomerase (203 aa).

This sequence belongs to the TrpF family.

It catalyses the reaction N-(5-phospho-beta-D-ribosyl)anthranilate = 1-(2-carboxyphenylamino)-1-deoxy-D-ribulose 5-phosphate. The protein operates within amino-acid biosynthesis; L-tryptophan biosynthesis; L-tryptophan from chorismate: step 3/5. This is N-(5'-phosphoribosyl)anthranilate isomerase from Thermoanaerobacter sp. (strain X514).